The sequence spans 845 residues: AdoMet-dependent rRNA methyltransferase SPB1 (845 aa).

Glycine 58, tryptophan 60, aspartate 78, aspartate 94, and aspartate 119 together coordinate S-adenosyl-L-methionine. Lysine 159 functions as the Proton acceptor in the catalytic mechanism. Disordered regions lie at residues 223–247 and 279–298; these read GGGNESKQNNEAKIFNPEKFSSQRQ and SLNKFDLPAPKDDDNDDDDH. 2 coiled-coil regions span residues 366–402 and 464–502; these read TEEQKIDQELQDLINKQKQKAKRLKKNANELKQKEII and DEEEINDNDKDSADELDELENQLDDMYHQYQARKAERDA. Over residues 496 to 512 the composition is skewed to basic and acidic residues; it reads RKAERDANYRAKQARGD. Disordered stretches follow at residues 496–546, 587–660, and 788–821; these read RKAE…DDDE, ENKT…HQQK, and KLNKKQKQKPKTTVVVARGSNRGLSGRPKGVKGK. Acidic residues-rich tracts occupy residues 513–528, 536–545, 610–624, and 633–648; these read ADDEAWNGIEEDNDDV, MESESDDDDD, NENDDGDNDEEESDF, and DDDDDDESMNSDDDEV. The stretch at 739-796 forms a coiled coil; sequence IKKVLEAQSRKKLRALKRLEKIKKKSDLINEDSGKSERDKADEISKLMKKLNKKQKQK. The segment covering 788 to 797 has biased composition (basic residues); sequence KLNKKQKQKP.

The protein belongs to the class I-like SAM-binding methyltransferase superfamily. RNA methyltransferase RlmE family. SPB1 subfamily. In terms of assembly, component of the nucleolar and nucleoplasmic pre-60S ribosomal particle.

Its subcellular location is the nucleus. It is found in the nucleolus. It catalyses the reaction a ribonucleotide in rRNA + S-adenosyl-L-methionine = a 2'-O-methylribonucleotide in rRNA + S-adenosyl-L-homocysteine + H(+). Its function is as follows. Required for proper assembly of pre-ribosomal particles during the biogenesis of the 60S ribosomal subunit. The chain is AdoMet-dependent rRNA methyltransferase SPB1 from Candida albicans (strain SC5314 / ATCC MYA-2876) (Yeast).